The following is a 356-amino-acid chain: Glutamine synthetase nodule isozyme (356 aa).

The GS beta-grasp domain maps to 19–99 (IIAEYIWIGG…VMCDAYTPAG (81 aa)). The segment at 41–66 (PGPVSDPSKLPKWNYDGSSTGQAPGE) is disordered. The 251-residue stretch at 106–356 (KRHNAAKIFS…IADTTILWKP (251 aa)) folds into the GS catalytic domain.

It belongs to the glutamine synthetase family. In terms of assembly, homooctamer.

The protein localises to the cytoplasm. The enzyme catalyses L-glutamate + NH4(+) + ATP = L-glutamine + ADP + phosphate + H(+). The sequence is that of Glutamine synthetase nodule isozyme from Vigna aconitifolia (Moth bean).